Reading from the N-terminus, the 158-residue chain is Transcription elongation factor GreA (158 aa).

Positions Glu5–Gln75 form a coiled coil.

Belongs to the GreA/GreB family.

In terms of biological role, necessary for efficient RNA polymerase transcription elongation past template-encoded arresting sites. The arresting sites in DNA have the property of trapping a certain fraction of elongating RNA polymerases that pass through, resulting in locked ternary complexes. Cleavage of the nascent transcript by cleavage factors such as GreA or GreB allows the resumption of elongation from the new 3'terminus. GreA releases sequences of 2 to 3 nucleotides. The sequence is that of Transcription elongation factor GreA from Novosphingobium aromaticivorans (strain ATCC 700278 / DSM 12444 / CCUG 56034 / CIP 105152 / NBRC 16084 / F199).